We begin with the raw amino-acid sequence, 410 residues long: MTTFGHDTWWLVAAKAIAVFVFLMLTVLVAILAERKLLGRMQLRPGPNRVGPKGALQSLADGIKLALKESITPGGIDRFVYFVAPIISVIPAFTAFAFIPFGPEVSVFGHRTPLQITDLPVAVLFILGLSAIGVYGIVLGGWASGSTYPLLGGVRSTAQVISYEVAMGLSFATVFLMAGTMSTSQIVAAQDGVWYAFLLLPSFVIYLISMVGETNRAPFDLPEAEGELVAGFHTEYSSLKFAMFMLAEYVNMTTVSALAATLFFGGWHAPWPLNMWASANTGWWPLIWFTAKVWGFLFIYFWLRATLPRLRYDQFMALGWKLLIPVSLVWVMVAAIIRSLRNQGYQYWTPTLVFSSIVVAAAMVLLLRKPLSAPGARASARQRGDEGTSPEPAFPTPPLLAGATKENAGG.

9 helical membrane-spanning segments follow: residues 11-31, 79-99, 119-139, 160-180, 192-212, 257-277, 283-303, 317-337, and 347-367; these read LVAA…LVAI, FVYF…FAFI, LPVA…GIVL, VISY…MAGT, GVWY…SMVG, ALAA…NMWA, WWPL…YFWL, ALGW…AAII, and YWTP…VLLL. Residues 376–410 form a disordered region; sequence ARASARQRGDEGTSPEPAFPTPPLLAGATKENAGG.

It belongs to the complex I subunit 1 family. In terms of assembly, NDH-1 is composed of 14 different subunits. Subunits NuoA, H, J, K, L, M, N constitute the membrane sector of the complex.

The protein localises to the cell membrane. The catalysed reaction is a quinone + NADH + 5 H(+)(in) = a quinol + NAD(+) + 4 H(+)(out). Functionally, NDH-1 shuttles electrons from NADH, via FMN and iron-sulfur (Fe-S) centers, to quinones in the respiratory chain. The immediate electron acceptor for the enzyme in this species is believed to be menaquinone. Couples the redox reaction to proton translocation (for every two electrons transferred, four hydrogen ions are translocated across the cytoplasmic membrane), and thus conserves the redox energy in a proton gradient. This Mycobacterium bovis (strain ATCC BAA-935 / AF2122/97) protein is NADH-quinone oxidoreductase subunit H.